The chain runs to 424 residues: Tyrosine--tRNA ligase (424 aa).

An L-tyrosine-binding site is contributed by Tyr-33. The short motif at 38–47 is the 'HIGH' region element; sequence PSADSLHIGH. Residues Tyr-170 and Gln-174 each coordinate L-tyrosine. The 'KMSKS' region signature appears at 230-234; sequence KFGKT. Lys-233 is an ATP binding site. Positions 357-424 constitute an S4 RNA-binding domain; that stretch reads MSLIDALVRC…RRHYHLIRLV (68 aa).

It belongs to the class-I aminoacyl-tRNA synthetase family. TyrS type 1 subfamily. In terms of assembly, homodimer.

The protein resides in the cytoplasm. It carries out the reaction tRNA(Tyr) + L-tyrosine + ATP = L-tyrosyl-tRNA(Tyr) + AMP + diphosphate + H(+). Catalyzes the attachment of tyrosine to tRNA(Tyr) in a two-step reaction: tyrosine is first activated by ATP to form Tyr-AMP and then transferred to the acceptor end of tRNA(Tyr). This chain is Tyrosine--tRNA ligase, found in Roseiflexus castenholzii (strain DSM 13941 / HLO8).